A 453-amino-acid polypeptide reads, in one-letter code: Homogentisate 1,2-dioxygenase (453 aa).

His-306 functions as the Proton acceptor in the catalytic mechanism. The Fe cation site is built by His-349 and Glu-355. Homogentisate-binding residues include Tyr-364 and His-385. His-385 is a binding site for Fe cation.

The protein belongs to the homogentisate dioxygenase family. Hexamer; dimer of trimers. It depends on Fe cation as a cofactor.

It carries out the reaction homogentisate + O2 = 4-maleylacetoacetate + H(+). Its pathway is amino-acid degradation; L-phenylalanine degradation; acetoacetate and fumarate from L-phenylalanine: step 4/6. Involved in the catabolism of homogentisate (2,5-dihydroxyphenylacetate or 2,5-OH-PhAc), a central intermediate in the degradation of phenylalanine and tyrosine. Catalyzes the oxidative ring cleavage of the aromatic ring of homogentisate to yield maleylacetoacetate. This Rhizobium etli (strain ATCC 51251 / DSM 11541 / JCM 21823 / NBRC 15573 / CFN 42) protein is Homogentisate 1,2-dioxygenase.